The sequence spans 772 residues: Carnitine O-palmitoyltransferase 1, muscle isoform (772 aa).

The Cytoplasmic segment spans residues 1-47; sequence MAEAHQAVAFQFTVTPEGVDFRLSREALKHIYLSGINSWKKRLIRIK. Residues 48-73 traverse the membrane as a helical segment; that stretch reads NGILRGVYPGSPTSWLVVASATAGSS. Topologically, residues 74 to 102 are mitochondrial intermembrane; that stretch reads YYNVDISMGLVNHIQRCLPERYGPYWTPQ. The helical transmembrane segment at 103–122 threads the bilayer; it reads TRALLSMAVVSTGVWMIGIF. Over 123–772 the chain is Cytoplasmic; the sequence is FFRQTLKLLL…DLFQVPKTDS (650 aa). The Proton acceptor role is filled by His473. 555–567 is a binding site for CoA; sequence GKGLIKKCRTSPD. (R)-carnitine contacts are provided by Tyr589 and Thr602.

Belongs to the carnitine/choline acetyltransferase family.

The protein localises to the mitochondrion outer membrane. It catalyses the reaction (R)-carnitine + hexadecanoyl-CoA = O-hexadecanoyl-(R)-carnitine + CoA. Its pathway is lipid metabolism; fatty acid beta-oxidation. Its function is as follows. Catalyzes the transfer of the acyl group of long-chain fatty acid-CoA conjugates onto carnitine, an essential step for the mitochondrial uptake of long-chain fatty acids and their subsequent beta-oxidation in the mitochondrion. In Sus scrofa (Pig), this protein is Carnitine O-palmitoyltransferase 1, muscle isoform (CPT1B).